The primary structure comprises 1116 residues: Disease resistance protein RGA5 (1116 aa).

A structured coiled coil (CC) domain region spans residues 1–177; the sequence is MDAPASFSLG…HHGVSANLVG (177 aa). An NB-ARC domain is found at 182–466; the sequence is KTKLNRWLSD…WSAEGFVSAN (285 aa). LRR repeat units lie at residues 608–631, 633–653, 654–675, 677–701, 732–755, 786–808, 810–830, 835–857, and 858–882; these read LFQL…ISGL, YLET…LVHL, PNLL…GCMR, LRTL…ELTN, LSNL…DISS, LHKL…DNLT, LPSL…RFIF, LPVL…AGAM, and PNLQ…LFGI. The disordered stretch occupies residues 935-971; it reads EEESHPLEKQHHKREKGSSAGHGVLEKESVEDSEKNT. Residues 958–971 show a composition bias toward basic and acidic residues; it reads VLEKESVEDSEKNT. One can recognise an HMA domain in the interval 997–1066; sequence RTKIVVKVHM…KCGLAELLMV (70 aa). The tract at residues 1000–1070 is HMA-like domain; the sequence is IVVKVHMPCG…AELLMVELVE (71 aa).

It belongs to the disease resistance NB-LRR family. In terms of assembly, forms homodimer or heterodimer with RGA4 through its coiled coil (CC) domain. Interacts with AVR1-Pia and AVR-CO39 through its C-terminal part containing the HMA-like domain. Expressed in leaves.

The protein resides in the cytoplasm. Disease resistance (R) protein that recognizes the AVR-Pia and AVR1-CO39 effector avirulence proteins from M.oryzae. Resistance proteins guard the plant against pathogens that contain an appropriate avirulence protein via an indirect interaction with this avirulence protein. That triggers a defense system including the hypersensitive response, which restricts the pathogen growth. Contribution of RGA4 is required to recognize the effector avirulence proteins AVR-Pia and AVR1-CO39 from M.oryzae. Acts as a repressor of the RGA4-mediated cell death activation. Upon infection, recognition and binding of the AVR effectors relieve the RGA5-mediated repression and triggers the hypersensitive response. Immune response triggered by the RGA4-RGA5 -mediated recognition of AVR1-CO39 confers resistance to X.oryzae pathovars. This is Disease resistance protein RGA5 from Oryza sativa subsp. japonica (Rice).